The following is a 125-amino-acid chain: Large ribosomal subunit protein bL12 (125 aa).

It belongs to the bacterial ribosomal protein bL12 family. Homodimer. Part of the ribosomal stalk of the 50S ribosomal subunit. Forms a multimeric L10(L12)X complex, where L10 forms an elongated spine to which 2 to 4 L12 dimers bind in a sequential fashion. Binds GTP-bound translation factors.

In terms of biological role, forms part of the ribosomal stalk which helps the ribosome interact with GTP-bound translation factors. Is thus essential for accurate translation. This is Large ribosomal subunit protein bL12 from Sinorhizobium medicae (strain WSM419) (Ensifer medicae).